Here is a 449-residue protein sequence, read N- to C-terminus: Alginate biosynthesis transcriptional regulatory protein AlgB (449 aa).

In terms of domain architecture, Response regulatory spans 10-124; the sequence is RILLVDDESA…QLRLAAAKQL (115 aa). Asp59 bears the 4-aspartylphosphate mark. One can recognise a Sigma-54 factor interaction domain in the interval 147 to 376; the sequence is LESHSPAMAA…LRNVIERASI (230 aa). Residues 175 to 182 and 238 to 247 each bind ATP; these read GESGSGKG and ADGGTLFLDE. Positions 426 to 445 form a DNA-binding region, H-T-H motif; it reads LDQAAKTLGIDASTLYRKRK.

Phosphorylated by KinB.

It functions in the pathway glycan biosynthesis; alginate biosynthesis [regulation]. Its function is as follows. Member of the two-component regulatory system AlgB/KinB involved in regulation of alginate biosynthesis genes. Positive regulator of the alginate biosynthetic gene AlgD. This chain is Alginate biosynthesis transcriptional regulatory protein AlgB (algB), found in Pseudomonas aeruginosa (strain ATCC 15692 / DSM 22644 / CIP 104116 / JCM 14847 / LMG 12228 / 1C / PRS 101 / PAO1).